The primary structure comprises 177 residues: Large ribosomal subunit protein uL6 (177 aa).

It belongs to the universal ribosomal protein uL6 family. Part of the 50S ribosomal subunit.

In terms of biological role, this protein binds to the 23S rRNA, and is important in its secondary structure. It is located near the subunit interface in the base of the L7/L12 stalk, and near the tRNA binding site of the peptidyltransferase center. The polypeptide is Large ribosomal subunit protein uL6 (Klebsiella pneumoniae subsp. pneumoniae (strain ATCC 700721 / MGH 78578)).